The chain runs to 197 residues: NADH-quinone oxidoreductase subunit C (197 aa).

Belongs to the complex I 30 kDa subunit family. As to quaternary structure, NDH-1 is composed of 14 different subunits. Subunits NuoB, C, D, E, F, and G constitute the peripheral sector of the complex.

It is found in the cell inner membrane. It carries out the reaction a quinone + NADH + 5 H(+)(in) = a quinol + NAD(+) + 4 H(+)(out). Its function is as follows. NDH-1 shuttles electrons from NADH, via FMN and iron-sulfur (Fe-S) centers, to quinones in the respiratory chain. The immediate electron acceptor for the enzyme in this species is believed to be ubiquinone. Couples the redox reaction to proton translocation (for every two electrons transferred, four hydrogen ions are translocated across the cytoplasmic membrane), and thus conserves the redox energy in a proton gradient. This is NADH-quinone oxidoreductase subunit C from Rickettsia prowazekii (strain Madrid E).